The following is a 215-amino-acid chain: Osteoclast-stimulating factor 1 (215 aa).

S2 is modified (N-acetylserine). Residues 12–71 (GQVKVFRALYTFEPRTPDELYFEEGDIIYITDMSDTSWWKGTCKGRTGLIPSNYVAEQAE) form the SH3 domain. ANK repeat units follow at residues 72–101 (SIDN…GVNG), 105–135 (AGST…ELNQ), and 139–168 (LGDT…RTDL). The segment at 192–215 (KQQGTDGARTLSNAEDYLDDEDSD) is disordered. The residue at position 201 (T201) is a Phosphothreonine. Phosphoserine is present on residues S203 and S214.

Interacts with C-SRC and SMN1. Interacts with FASLG.

Its subcellular location is the cytoplasm. Induces bone resorption, acting probably through a signaling cascade which results in the secretion of factor(s) enhancing osteoclast formation and activity. The chain is Osteoclast-stimulating factor 1 (Ostf1) from Mus musculus (Mouse).